Here is a 147-residue protein sequence, read N- to C-terminus: Small ribosomal subunit protein uS12 (147 aa).

It belongs to the universal ribosomal protein uS12 family. Part of the 30S ribosomal subunit.

Functionally, with S4 and S5 plays an important role in translational accuracy. Located at the interface of the 30S and 50S subunits. This is Small ribosomal subunit protein uS12 from Staphylothermus marinus (strain ATCC 43588 / DSM 3639 / JCM 9404 / F1).